We begin with the raw amino-acid sequence, 291 residues long: 4-diphosphocytidyl-2-C-methyl-D-erythritol kinase (291 aa).

The active site involves Lys-21. 104–114 is an ATP binding site; that stretch reads PMGGGLGGGSS. Asp-146 is a catalytic residue.

It belongs to the GHMP kinase family. IspE subfamily.

It carries out the reaction 4-CDP-2-C-methyl-D-erythritol + ATP = 4-CDP-2-C-methyl-D-erythritol 2-phosphate + ADP + H(+). It participates in isoprenoid biosynthesis; isopentenyl diphosphate biosynthesis via DXP pathway; isopentenyl diphosphate from 1-deoxy-D-xylulose 5-phosphate: step 3/6. Its function is as follows. Catalyzes the phosphorylation of the position 2 hydroxy group of 4-diphosphocytidyl-2C-methyl-D-erythritol. This Methylococcus capsulatus (strain ATCC 33009 / NCIMB 11132 / Bath) protein is 4-diphosphocytidyl-2-C-methyl-D-erythritol kinase.